Reading from the N-terminus, the 200-residue chain is Small ribosomal subunit protein eS1 (200 aa).

The protein belongs to the eukaryotic ribosomal protein eS1 family.

The protein is Small ribosomal subunit protein eS1 of Thermococcus gammatolerans (strain DSM 15229 / JCM 11827 / EJ3).